Reading from the N-terminus, the 150-residue chain is Small heat shock protein IbpB (150 aa).

In terms of domain architecture, sHSP spans 26–137 (SQEPIDFPPY…QPQRIAIGGG (112 aa)).

It belongs to the small heat shock protein (HSP20) family. As to quaternary structure, homodimer. Forms homomultimers of about 100-150 subunits at optimal growth temperatures. Conformation changes to oligomers at high temperatures or high ionic concentrations. The decrease in size of the multimers is accompanied by an increase in chaperone activity.

The protein localises to the cytoplasm. Functionally, associates with aggregated proteins, together with IbpA, to stabilize and protect them from irreversible denaturation and extensive proteolysis during heat shock and oxidative stress. Aggregated proteins bound to the IbpAB complex are more efficiently refolded and reactivated by the ATP-dependent chaperone systems ClpB and DnaK/DnaJ/GrpE. Its activity is ATP-independent. The protein is Small heat shock protein IbpB of Pectobacterium atrosepticum (strain SCRI 1043 / ATCC BAA-672) (Erwinia carotovora subsp. atroseptica).